Here is a 361-residue protein sequence, read N- to C-terminus: G2/mitotic-specific cyclin-B1 (361 aa).

Polar residues predominate over residues 1 to 13; the sequence is MLRATNNRRTSNN. A disordered region spans residues 1–33; it reads MLRATNNRRTSNNVEKDSLQMAKHGNGPLKPVN.

It belongs to the cyclin family. Cyclin AB subfamily. Interacts with the CDK1 protein kinase to form a serine/threonine kinase holoenzyme complex also known as maturation promoting factor (MPF). The cyclin subunit imparts substrate specificity to the complex. Interacts with E3 ubiquitin-protein ligase etc-1. In terms of processing, ubiquitinated by etc-1 likely during meiosis, resulting in its degradation.

It localises to the cytoplasm. Its function is as follows. Essential for the control of the cell cycle at the G2/M (mitosis) transition. The protein is G2/mitotic-specific cyclin-B1 (cyb-1) of Caenorhabditis elegans.